Here is an 89-residue protein sequence, read N- to C-terminus: MSLNIKSQRTVALVRELAARTGTNQTAAVEDAVARRLSELDREDRARAEARRAAAEQTLRDLDKLLSDDDKRLIRRHEVDLYDDSGLPR.

Functionally, possibly the antitoxin component of a type II toxin-antitoxin (TA) system. Its cognate toxin is VapC42 (Potential). The polypeptide is Putative antitoxin VapB42 (vapB42) (Mycobacterium tuberculosis (strain CDC 1551 / Oshkosh)).